The sequence spans 1369 residues: DNA-directed RNA polymerase subunit beta' (1369 aa).

The tract at residues 1-43 (MTSSSPKTRKSSTKSKAKRGSKSKKAAEIKAVQRLSKTPPPFR) is disordered. Residues 7 to 24 (KTRKSSTKSKAKRGSKSK) are compositionally biased toward basic residues. Positions 253, 320, 327, and 330 each coordinate Zn(2+). Residues 1294-1369 (TVDMPSSPVA…LQEEGLLSDE (76 aa)) are disordered. The span at 1342–1351 (DDELSAEDQM) shows a compositional bias: acidic residues. The segment covering 1357–1369 (LEGLQEEGLLSDE) has biased composition (low complexity).

This sequence belongs to the RNA polymerase beta' chain family. RpoC2 subfamily. In terms of assembly, in cyanobacteria the RNAP catalytic core is composed of 2 alpha, 1 beta, 1 beta', 1 gamma and 1 omega subunit. When a sigma factor is associated with the core the holoenzyme is formed, which can initiate transcription. It depends on Zn(2+) as a cofactor.

It catalyses the reaction RNA(n) + a ribonucleoside 5'-triphosphate = RNA(n+1) + diphosphate. Its function is as follows. DNA-dependent RNA polymerase catalyzes the transcription of DNA into RNA using the four ribonucleoside triphosphates as substrates. The chain is DNA-directed RNA polymerase subunit beta' from Prochlorococcus marinus (strain NATL1A).